Reading from the N-terminus, the 353-residue chain is Photosystem II protein D1 (353 aa).

At threonine 2 the chain carries N-acetylthreonine. Phosphothreonine is present on threonine 2. 3 helical membrane passes run 29–46 (YIGW…TATA), 118–133 (HFLL…EWEL), and 142–156 (WIAV…AAAA). Histidine 118 is a chlorophyll a binding site. Tyrosine 126 contributes to the pheophytin a binding site. [CaMn4O5] cluster is bound by residues aspartate 170 and glutamate 189. A helical transmembrane segment spans residues 197–218 (FHMLGVAGVFGGSLFSAMHGSL). Histidine 198 contributes to the chlorophyll a binding site. A quinone contacts are provided by residues histidine 215 and 264 to 265 (SF). Histidine 215 contacts Fe cation. Histidine 272 contacts Fe cation. Residues 274-288 (FLAAWPVVGIWFTAL) form a helical membrane-spanning segment. [CaMn4O5] cluster contacts are provided by histidine 332, glutamate 333, aspartate 342, and alanine 344. The propeptide occupies 345-353 (SVEAPSVNG).

The protein belongs to the reaction center PufL/M/PsbA/D family. PSII is composed of 1 copy each of membrane proteins PsbA, PsbB, PsbC, PsbD, PsbE, PsbF, PsbH, PsbI, PsbJ, PsbK, PsbL, PsbM, PsbT, PsbX, PsbY, PsbZ, Psb30/Ycf12, at least 3 peripheral proteins of the oxygen-evolving complex and a large number of cofactors. It forms dimeric complexes. Requires The D1/D2 heterodimer binds P680, chlorophylls that are the primary electron donor of PSII, and subsequent electron acceptors. It shares a non-heme iron and each subunit binds pheophytin, quinone, additional chlorophylls, carotenoids and lipids. D1 provides most of the ligands for the Mn4-Ca-O5 cluster of the oxygen-evolving complex (OEC). There is also a Cl(-1) ion associated with D1 and D2, which is required for oxygen evolution. The PSII complex binds additional chlorophylls, carotenoids and specific lipids. as cofactor. Tyr-161 forms a radical intermediate that is referred to as redox-active TyrZ, YZ or Y-Z. Post-translationally, C-terminally processed by CTPA; processing is essential to allow assembly of the oxygen-evolving complex and thus photosynthetic growth.

The protein localises to the plastid. Its subcellular location is the chloroplast thylakoid membrane. The catalysed reaction is 2 a plastoquinone + 4 hnu + 2 H2O = 2 a plastoquinol + O2. Photosystem II (PSII) is a light-driven water:plastoquinone oxidoreductase that uses light energy to abstract electrons from H(2)O, generating O(2) and a proton gradient subsequently used for ATP formation. It consists of a core antenna complex that captures photons, and an electron transfer chain that converts photonic excitation into a charge separation. The D1/D2 (PsbA/PsbD) reaction center heterodimer binds P680, the primary electron donor of PSII as well as several subsequent electron acceptors. This is Photosystem II protein D1 from Huperzia lucidula (Shining clubmoss).